Reading from the N-terminus, the 292-residue chain is 33 kDa chaperonin (292 aa).

2 disulfides stabilise this stretch: Cys-229–Cys-231 and Cys-262–Cys-265.

This sequence belongs to the HSP33 family. Post-translationally, under oxidizing conditions two disulfide bonds are formed involving the reactive cysteines. Under reducing conditions zinc is bound to the reactive cysteines and the protein is inactive.

It is found in the cytoplasm. Its function is as follows. Redox regulated molecular chaperone. Protects both thermally unfolding and oxidatively damaged proteins from irreversible aggregation. Plays an important role in the bacterial defense system toward oxidative stress. This Photobacterium profundum (strain SS9) protein is 33 kDa chaperonin.